The primary structure comprises 527 residues: Peptide chain release factor 3 (527 aa).

The region spanning 9 to 278 (NKRRTFAIIS…GLTQWAPKPQ (270 aa)) is the tr-type G domain. GTP is bound by residues 18-25 (SHPDAGKT), 86-90 (DTPGH), and 140-143 (NKLD).

This sequence belongs to the TRAFAC class translation factor GTPase superfamily. Classic translation factor GTPase family. PrfC subfamily.

Its subcellular location is the cytoplasm. Its function is as follows. Increases the formation of ribosomal termination complexes and stimulates activities of RF-1 and RF-2. It binds guanine nucleotides and has strong preference for UGA stop codons. It may interact directly with the ribosome. The stimulation of RF-1 and RF-2 is significantly reduced by GTP and GDP, but not by GMP. The chain is Peptide chain release factor 3 from Haemophilus influenzae (strain 86-028NP).